A 429-amino-acid polypeptide reads, in one-letter code: Enolase (429 aa).

Q168 is a binding site for (2R)-2-phosphoglycerate. E210 serves as the catalytic Proton donor. Mg(2+) is bound by residues D247, E288, and D315. (2R)-2-phosphoglycerate-binding residues include K340, R369, S370, and K391. Catalysis depends on K340, which acts as the Proton acceptor.

Belongs to the enolase family. Mg(2+) is required as a cofactor.

The protein localises to the cytoplasm. It localises to the secreted. The protein resides in the cell surface. It catalyses the reaction (2R)-2-phosphoglycerate = phosphoenolpyruvate + H2O. The protein operates within carbohydrate degradation; glycolysis; pyruvate from D-glyceraldehyde 3-phosphate: step 4/5. Its function is as follows. Catalyzes the reversible conversion of 2-phosphoglycerate (2-PG) into phosphoenolpyruvate (PEP). It is essential for the degradation of carbohydrates via glycolysis. The polypeptide is Enolase (Nostoc punctiforme (strain ATCC 29133 / PCC 73102)).